The following is a 274-amino-acid chain: Outer surface protein A (274 aa).

The first 16 residues, 1-16, serve as a signal peptide directing secretion; the sequence is MKKYLLGIGLILALIA. Cysteine 17 is lipidated: N-palmitoyl cysteine. Cysteine 17 carries S-diacylglycerol cysteine lipidation.

The protein belongs to the OspA lipoprotein family.

It localises to the cell outer membrane. The protein resides in the cell surface. This Borreliella burgdorferi (Lyme disease spirochete) protein is Outer surface protein A.